Reading from the N-terminus, the 1040-residue chain is Multidrug resistance protein MdtB (1040 aa).

12 consecutive transmembrane segments (helical) span residues 16–36 (FIMR…AGII), 347–367 (LMMA…NIPA), 369–389 (IIPG…MVFL), 396–416 (LTLM…IVVI), 440–460 (IGFT…PLLF), 472–492 (FAIT…TLTP), 537–557 (WLTL…WVFI), 863–883 (LGST…VLGI), 888–908 (FIHP…ALLA), 911–931 (IAGS…IGIV), 968–988 (ILMT…STGV), and 998–1018 (IGMV…TPVI).

This sequence belongs to the resistance-nodulation-cell division (RND) (TC 2.A.6) family. MdtB subfamily. In terms of assembly, part of a tripartite efflux system composed of MdtA, MdtB and MdtC. MdtB forms a heteromultimer with MdtC.

It localises to the cell inner membrane. Its function is as follows. The MdtABC tripartite complex confers resistance against novobiocin and deoxycholate. This chain is Multidrug resistance protein MdtB, found in Escherichia coli (strain 55989 / EAEC).